A 566-amino-acid polypeptide reads, in one-letter code: Transcription factor tasR (566 aa).

The span at 1 to 30 (MISASRMEESASSSSLSDAAAPPPGAALQS) shows a compositional bias: low complexity. Residues 1 to 31 (MISASRMEESASSSSLSDAAAPPPGAALQSI) form a disordered region. Residues 35–68 (CDRCRFHKLKCNVPAAGHGGPVPCERCTRAKVPC) constitute a DNA-binding region (zn(2)-C6 fungal-type). Disordered stretches follow at residues 72–174 (RRRR…PGQH), 346–382 (EFIV…GGDD), 422–453 (SESD…TGTA), and 500–551 (RGVG…GLGG). Low complexity-rich tracts occupy residues 89–108 (PTRR…TSAA) and 359–378 (SESS…NNEA). Over residues 501-532 (GVGGGGGGGGGGGGGGGGGVGGGGGGGGGPGG) the composition is skewed to gly residues.

The protein resides in the nucleus. Its function is as follows. Transcription factor that regulates the expression of the gene cluster that mediates the biosynthesis of the tetramic acids Sch210971 and Sch210972, potential anti-HIV fungal natural product that contain a decalin core. In Hapsidospora irregularis, this protein is Transcription factor tasR.